Reading from the N-terminus, the 111-residue chain is C-type lectin lectoxin-Enh1 (111 aa).

A signal peptide spans 1–23 (MGQFTVVSLGLLAMFLSLSGAKG). An intrachain disulfide couples Cys26 to Cys37. A C-type lectin domain is found at 33 to 108 (RNGVCNKLFP…CASLHPFICQ (76 aa)). The Mannose-binding signature appears at 72–74 (EPN). The Ca(2+) site is built by Glu80, Asn95, and Asp96. Residues Cys82 and Cys99 are joined by a disulfide bond.

The protein belongs to the true venom lectin family. Expressed by the venom gland.

The protein resides in the secreted. Functionally, mannose-binding lectin which recognizes specific carbohydrate structures and agglutinates a variety of animal cells by binding to cell-surface glycoproteins and glycolipids. May be a calcium-dependent lectin. The chain is C-type lectin lectoxin-Enh1 from Pseudoferania polylepis (Macleay's water snake).